The primary structure comprises 369 residues: Leucine-specific-binding protein (369 aa).

The first 23 residues, 1–23, serve as a signal peptide directing secretion; that stretch reads MKRKAKTIIAGIVALAVSQGAMA. A disulfide bridge connects residues Cys-76 and Cys-101.

Belongs to the leucine-binding protein family.

The protein localises to the periplasm. Its function is as follows. This protein is a component of the leucine-specific transport system, which is one of the two periplasmic binding protein-dependent transport systems of the high-affinity transport of the branched-chain amino acids. This chain is Leucine-specific-binding protein (livK), found in Salmonella typhi.